The following is a 236-amino-acid chain: Ureidoacrylate amidohydrolase RutB (236 aa).

D24 functions as the Proton acceptor in the catalytic mechanism. K133 is an active-site residue. C166 (nucleophile) is an active-site residue.

It belongs to the isochorismatase family. RutB subfamily.

It carries out the reaction (Z)-3-ureidoacrylate + H2O + H(+) = (Z)-3-aminoacrylate + NH4(+) + CO2. It catalyses the reaction (Z)-3-ureidoacrylate + H2O = (Z)-3-aminoacrylate + carbamate + H(+). The catalysed reaction is (Z)-2-methylureidoacrylate + H2O + H(+) = (Z)-2-methylaminoacrylate + NH4(+) + CO2. Functionally, hydrolyzes ureidoacrylate to form aminoacrylate and carbamate. The carbamate hydrolyzes spontaneously, thereby releasing one of the nitrogen atoms of the pyrimidine ring as ammonia and one of its carbon atoms as CO2. This Klebsiella pneumoniae subsp. pneumoniae (strain ATCC 700721 / MGH 78578) protein is Ureidoacrylate amidohydrolase RutB.